The following is a 169-amino-acid chain: Large ribosomal subunit protein uL5 (169 aa).

This sequence belongs to the universal ribosomal protein uL5 family. As to quaternary structure, part of the 50S ribosomal subunit; contacts the 5S rRNA and probably tRNA. Forms a bridge to the 30S subunit in the 70S ribosome.

Its function is as follows. This is one of the proteins that bind and probably mediate the attachment of the 5S RNA into the large ribosomal subunit, where it forms part of the central protuberance. In the 70S ribosome it contacts protein S13 of the 30S subunit (bridge B1b), connecting the 2 subunits; this bridge is implicated in subunit movement. May contact the P site tRNA; the 5S rRNA and some of its associated proteins might help stabilize positioning of ribosome-bound tRNAs. This is Large ribosomal subunit protein uL5 from Nanoarchaeum equitans (strain Kin4-M).